The sequence spans 803 residues: Cation channel sperm-associated auxiliary subunit delta (803 aa).

An N-terminal signal peptide occupies residues 1 to 15 (MLMLMLAAVATVVRA). Residues 16 to 720 (QTVCRFRTVR…ALPVAEFRPM (705 aa)) lie on the Extracellular side of the membrane. 7 cysteine pairs are disulfide-bonded: Cys19-Cys365, Cys55-Cys142, Cys141-Cys148, Cys383-Cys492, Cys506-Cys698, Cys521-Cys568, and Cys620-Cys648. 7 N-linked (GlcNAc...) asparagine glycosylation sites follow: Asn226, Asn418, Asn436, Asn468, Asn534, Asn545, and Asn626. A helical membrane pass occupies residues 721 to 742 (TSILLMVTVTLFTMWLAYAIPK). At 743–803 (QLRTERGRRL…QIGKKPDIKK (61 aa)) the chain is on the cytoplasmic side. Residues 782 to 803 (SRRVKDQPEKIPQIGKKPDIKK) form a disordered region.

The protein belongs to the CATSPERD family. As to quaternary structure, component of the CatSper complex or CatSpermasome composed of the core pore-forming members CATSPER1, CATSPER2, CATSPER3 and CATSPER4 as well as auxiliary members CATSPERB, CATSPERG, CATSPERD, CATSPERE, CATSPERZ, C2CD6/CATSPERT, SLCO6C1, TMEM249, TMEM262 and EFCAB9. HSPA1 may be an additional auxiliary complex member. The core complex members CATSPER1, CATSPER2, CATSPER3 and CATSPER4 form a heterotetrameric channel. The auxiliary CATSPERB, CATSPERG, CATSPERD and CATSPERE subunits form a pavilion-like structure over the pore which stabilizes the complex through interactions with CATSPER4, CATSPER3, CATSPER1 and CATSPER2 respectively. SLCO6C1 interacts with CATSPERE and TMEM262/CATSPERH interacts with CATSPERB, further stabilizing the complex. C2CD6/CATSPERT interacts at least with CATSPERD and is required for targeting the CatSper complex in the flagellar membrane.

It is found in the cell projection. It localises to the cilium. The protein localises to the flagellum membrane. Functionally, auxiliary component of the CatSper complex, a complex involved in sperm cell hyperactivation. Sperm cell hyperactivation is needed for sperm motility which is essential late in the preparation of sperm for fertilization. Required for CATSPER1 stability before intraflagellar transport and/or incorporation of the CatSper complex channel into the flagellar membrane. In Rattus norvegicus (Rat), this protein is Cation channel sperm-associated auxiliary subunit delta.